The chain runs to 2005 residues: MAAADGGGPGGASVGTEEDGGGVGHRTVYLFDRREKESELGDRPLQVGERSDYAGFRACVCQTLGISPEEKFVITTTSRKEITCDNFDETVKDGVTLYLLQSVNQLLLTATKERIDFLPHYDTLVKSGMYEYYASEGQNPLPFALAELIDNSLSATSRNIGVRRIQIKLLFDETQGKPAVAVIDNGRGMTSKQLNNWAVYRLSKFTRQGDFESDHSGYVRPVPVPRSLNSDISYFGVGGKQAVFFVGQSARMISKPADSQDVHELVLSKEDFEKKEKNKEAIYSGYIRNRKPSDSVHITNDDERFLHHLIIEEKEKDSFTAVVITGVQPEHIQYLKNYFHLWTRQLAHIYHYYIHGPKGNEIRTSKEVEPFNNIDIEISMFEKGKVPKIVNLREIQDDMQTLYVNTAADSFEFKAHVEGDGVVEGIIRYHPFLYDRETYPDDPCFPSKLKDEDDEDDCFILEKAARGKRPIFECFWNGRLIPYTSVEDFDWCTPPKKRGLAPIECYNRISGALFTNDKFQVSTNKLTFMDLELKLKDKNTLFTRILNGQEQRMKIDREFALWLKDCHEKYDKQIKFTLFKGVITRPDLPSKKQGPWATYAAIEWDGKIYKAGQLVKTIKTLPLFYGSIVRFFLYGDHDGEVYATGGEVQIAMEPQALYDEVRTVPIAKLDRTVAEKAVKKYVEDEMARLPDRLSVTWPEGDELLPNEVRPAGTPIGALRIEILNKKGEAMQKLPGTSHGGSKKLLVELKVILHSSSGNKEIISHISQHGGKWPYWFKKMENIQKLGNYTLKLQVVLNESNADTYAGRPLPSKAIKFSVKEGKPEKFSFGLLDLPFRVGVPFNIPLEFQDEFGHTSQLVTDIQPVLEASGLSLHYEEITKGPNCVIRGVTAKGPVNSCQGKNYNLKVTLPGLKEDSQILKIRLLPGHPRRLKVKPDSEILVIENGTAFPFQVEVLDESDNITAQPKLIVHCKFSGAPNLPVYVVDCSSSGTSILTGSAIQVQNIKKDQTLKARIEIPSCKDVAPVEKTIKLLPSSHVARLQIFSVEGQKAIQIKHQDEVNWIAGDIMHNLIFQMYDEGEREINITSALAEKIKVNWTPEINKEHLLQGLLPDVQVPTSVKDMRYCQVSFQDDHVSLESAFTVRPLPDEPKHLKCEMKGGKTVQMGQELQGEVVIIITDQYGNQIQAFSPSSLSSLSIAGVGLDSSNLKTTFQENTQSISVRGIKFIPGPPGNKDLCFTWREFSDFIRVQLISGPPAKLLLIDWPELKESIPVINGRDLQNPIIVQLCDQWDNPAPVQHVKISLTKASNLKLMPSNQQHKTDEKGRANLGVFSVFAPRGEHTLQVKAIYNKSIIEGPIIKLMILPDPEKPVRLNVKYDKDASFLAGGLFTDFMISVISEDDSIIKNINPARISMKMWKLSTSGNRPPANAETFSCNKIKDNDKEDGCFYFRDKVIPNKVGTYCIQFGFMMDKTNILNSEQVIVEVLPNQPVKLVPKIKPPTPAVSNVRSVASRTLVRDLHLSITDDYDNHTGIDLVGTIIATIKGSNEEDTDTPLFIGKVRTLEFPFVNGSAEIMSLVLAESSPGRDSTEYFIVFEPRLPLLSRTLEPYILPFMFYNDVKKQQQMAALTKEKDQLSQSIVMYKSLFEASQQLLNEMKCQVEEARLKEAQLRNELKIHNIDIPTTQQVPHIEALLKRKLSEQEELKKKPRRSCTLPNYTKGSGDVLGKIAHLAQIEDDRAAMVISWHLASDMDCVVTLTTDAARRIYDETQGRQQVLPLDSIYKKTLPDWKRSLPHFRNGKLYFKPIGDPVFARDLLTFPDNVEHCETVFGMLLGDTIILDNLDAANHYRKEVVKITHCPTLLTRDGDRIRSNGKFGGLQNKAPPMDKLRGMVFGAPVPKQCLILGEQIDLLQQYRSAVCKLDSVNKDLNSQLEYLRTPDMRKKKQELDEHEKNLKLIEEKLGMTPIRKCNDSLRHSPKVETTDCPVPPKRMRREATRQNRIITKTDV.

A compositionally biased stretch (gly residues) spans methionine 1–serine 13. A disordered region spans residues methionine 1–valine 23. Alanine 2 is subject to N-acetylalanine. Residues threonine 111 to glutamate 702 form an ATPase activity domain region. Residue lysine 1349 is modified to N6-acetyllysine. Glycyl lysine isopeptide (Lys-Gly) (interchain with G-Cter in SUMO2) cross-links involve residues lysine 1374 and lysine 1496. Threonine 1499 carries the phosphothreonine modification. The 128-residue stretch at glycine 1720–arginine 1847 folds into the SMC hinge domain. At lysine 1802 the chain carries N6-succinyllysine. Serine 1974 carries the phosphoserine modification.

The protein belongs to the SMC family. Highly divergent. As to quaternary structure, homodimer; homodimerizes via its SMC hinge domain. Interacts with LRIF1. Post-translationally, sumoylated with SUMO1.

The protein resides in the chromosome. It carries out the reaction ATP + H2O = ADP + phosphate + H(+). In terms of biological role, non-canonical member of the structural maintenance of chromosomes (SMC) protein family that plays a key role in epigenetic silencing by regulating chromatin architecture. Promotes heterochromatin formation in both autosomes and chromosome X, probably by mediating the merge of chromatin compartments. Plays a key role in chromosome X inactivation in females by promoting the spreading of heterochromatin. Recruited to inactivated chromosome X by Xist RNA and acts by mediating the merge of chromatin compartments: promotes random chromatin interactions that span the boundaries of existing structures, leading to create a compartment-less architecture typical of inactivated chromosome X. Required to facilitate Xist RNA spreading. Also required for silencing of a subset of clustered autosomal loci in somatic cells, such as the DUX4 locus. Has ATPase activity; may participate in structural manipulation of chromatin in an ATP-dependent manner as part of its role in gene expression regulation. Also plays a role in DNA repair: localizes to sites of DNA double-strand breaks in response to DNA damage to promote the repair of DNA double-strand breaks. Acts by promoting non-homologous end joining (NHEJ) and inhibiting homologous recombination (HR) repair. This Homo sapiens (Human) protein is Structural maintenance of chromosomes flexible hinge domain-containing protein 1.